Reading from the N-terminus, the 1079-residue chain is Integrator complex subunit 3 homolog (1079 aa).

Disordered regions lie at residues Glu-544–Pro-574, Tyr-925–Ala-949, and Ala-1010–Asp-1079. Residues Lys-938–Ala-949 are compositionally biased toward low complexity. Ser-1049, Ser-1050, Ser-1054, and Ser-1055 each carry phosphoserine. The span at His-1062 to Lys-1073 shows a compositional bias: basic residues.

It belongs to the Integrator subunit 3 family. Belongs to the multiprotein complex Integrator, at least composed of IntS1, IntS2, IntS3, IntS4, omd/IntS5, IntS6, defl/IntS7, IntS8, IntS9, IntS10, IntS11, IntS12, asun/IntS13, IntS14 and IntS15. The core complex associates with protein phosphatase 2A subunits mts/PP2A and Pp2A-29B, to form the Integrator-PP2A (INTAC) complex.

It is found in the nucleus. The protein localises to the cytoplasm. In terms of biological role, component of the integrator complex, a multiprotein complex that terminates RNA polymerase II (Pol II) transcription in the promoter-proximal region of genes. The integrator complex provides a quality checkpoint during transcription elongation by driving premature transcription termination of transcripts that are unfavorably configured for transcriptional elongation: the complex terminates transcription by (1) catalyzing dephosphorylation of the C-terminal domain (CTD) of Pol II subunit Polr2A/Rbp1 and Spt5, and (2) degrading the exiting nascent RNA transcript via endonuclease activity. The integrator complex is also involved in the 3'-end processing of the U7 snRNA, and also the spliceosomal snRNAs U1, U2, U4 and U5. This is Integrator complex subunit 3 homolog (IntS3) from Drosophila mojavensis (Fruit fly).